Consider the following 333-residue polypeptide: T-cell surface glycoprotein CD1c (333 aa).

Residues 1-17 (MLFLQFLLLALLLPGGD) form the signal peptide. Residues 18-302 (NADASQEHVS…ILYWGHHFSM (285 aa)) are Extracellular-facing. Asn-38, Asn-70, Asn-75, and Asn-146 each carry an N-linked (GlcNAc...) asparagine glycan. 2 disulfide bridges follow: Cys-120/Cys-185 and Cys-225/Cys-280. In terms of domain architecture, Ig-like spans 206–296 (PEAWLSSRPS…LGGQDIILYW (91 aa)). The chain crosses the membrane as a helical span at residues 303-323 (NWIALVVIVPLVILIVLVLWF). The Cytoplasmic segment spans residues 324–333 (KKHCSYQDIL). Residues 329-332 (YQDI) carry the Internalization signal motif.

In terms of assembly, heterodimer with B2M (beta-2-microglobulin). In terms of tissue distribution, expressed on cortical thymocytes, on certain T-cell leukemias, and in various other tissues.

The protein localises to the cell membrane. It localises to the endosome membrane. Its subcellular location is the lysosome. Functionally, antigen-presenting protein that binds self and non-self lipid and glycolipid antigens and presents them to T-cell receptors on natural killer T-cells. The polypeptide is T-cell surface glycoprotein CD1c (CD1C) (Homo sapiens (Human)).